The following is a 339-amino-acid chain: Anthranilate phosphoribosyltransferase (339 aa).

Residues G81, 84-85 (GD), T89, 91-94 (NIST), 109-117 (KHGNRSVSS), and S121 contribute to the 5-phospho-alpha-D-ribose 1-diphosphate site. Position 81 (G81) interacts with anthranilate. S93 serves as a coordination point for Mg(2+). N112 lines the anthranilate pocket. R165 is an anthranilate binding site. Mg(2+) contacts are provided by D224 and E225.

This sequence belongs to the anthranilate phosphoribosyltransferase family. Homodimer. Mg(2+) is required as a cofactor.

The enzyme catalyses N-(5-phospho-beta-D-ribosyl)anthranilate + diphosphate = 5-phospho-alpha-D-ribose 1-diphosphate + anthranilate. The protein operates within amino-acid biosynthesis; L-tryptophan biosynthesis; L-tryptophan from chorismate: step 2/5. Its function is as follows. Catalyzes the transfer of the phosphoribosyl group of 5-phosphorylribose-1-pyrophosphate (PRPP) to anthranilate to yield N-(5'-phosphoribosyl)-anthranilate (PRA). The polypeptide is Anthranilate phosphoribosyltransferase (Thermosynechococcus vestitus (strain NIES-2133 / IAM M-273 / BP-1)).